The chain runs to 273 residues: NAD-dependent protein deacylase (273 aa).

The Deacetylase sirtuin-type domain occupies Arg20–Gly272. NAD(+) is bound at residue Gly48–Trp67. 2 residues coordinate substrate: Tyr92 and Arg95. Gln129–Asp132 is a binding site for NAD(+). The active-site Proton acceptor is the His147. Positions 155 and 174 each coordinate Zn(2+). NAD(+) is bound by residues Gly214–Ser216, Asn240–Glu242, and Ala258.

Belongs to the sirtuin family. Class III subfamily. It depends on Zn(2+) as a cofactor.

The protein resides in the cytoplasm. It carries out the reaction N(6)-acetyl-L-lysyl-[protein] + NAD(+) + H2O = 2''-O-acetyl-ADP-D-ribose + nicotinamide + L-lysyl-[protein]. It catalyses the reaction N(6)-succinyl-L-lysyl-[protein] + NAD(+) + H2O = 2''-O-succinyl-ADP-D-ribose + nicotinamide + L-lysyl-[protein]. The catalysed reaction is N(6)-(2-hydroxyisobutanoyl)-L-lysyl-[protein] + NAD(+) + H2O = 2''-O-(2-hydroxyisobutanoyl)-ADP-D-ribose + nicotinamide + L-lysyl-[protein]. Functionally, NAD-dependent lysine deacetylase that specifically removes acetyl groups on target proteins. Also acts as a protein-lysine deacylase by mediating protein desuccinylation and de-2-hydroxyisobutyrylation. Modulates the activities of several proteins which are inactive in their acylated form. The chain is NAD-dependent protein deacylase from Escherichia coli O6:H1 (strain CFT073 / ATCC 700928 / UPEC).